Consider the following 235-residue polypeptide: MAVHTNRQILTRGKNYATKQSKKFGTDEVTFDKDSRLDYLTGFHKRKLQRQKKAQEFIKEQERLRKIEERQKIRQERKEVMEEQLKTFKESLNLEAEIEDAKNDKTEDLQVESDESWHGFDSDKDDGDNDNNESSVKPILKKGAITEIYDDSTTVELETLEPNDNFEYLAQLNNVKLEKAEKVLKQSINRATKYAKFLGVDEKQKKKPRVKKFRYLTKNERRINQRKANDNKRRR.

Residues 49-110 (QRQKKAQEFI…AKNDKTEDLQ (62 aa)) are a coiled coil. Positions 99 to 108 (EDAKNDKTED) are enriched in basic and acidic residues. Disordered stretches follow at residues 99–138 (EDAK…SVKP) and 209–235 (RVKK…KRRR). Serine 113, serine 116, and serine 122 each carry phosphoserine. The span at 217–235 (TKNERRINQRKANDNKRRR) shows a compositional bias: basic and acidic residues.

Belongs to the RRP17 family.

The protein resides in the nucleus. The protein localises to the nucleolus. In terms of biological role, essential protein involved in ribosomal RNA processing. In Saccharomyces cerevisiae (strain ATCC 204508 / S288c) (Baker's yeast), this protein is Ribosomal RNA-processing protein 17 (RRP17).